A 312-amino-acid polypeptide reads, in one-letter code: Protein-methionine-sulfoxide reductase catalytic subunit MsrP (312 aa).

A signal peptide (tat-type signal) is located at residues 1–47; that stretch reads MLIRRPPDLLPSEITPEPLARGRRALLKGLGAGAALAGLGLPQISQA. Mo-molybdopterin contacts are provided by residues asparagine 74, 77 to 78, cysteine 133, threonine 168, asparagine 216, arginine 221, and 232 to 234; these read YE and SAK.

The protein belongs to the MsrP family. In terms of assembly, heterodimer of a catalytic subunit (MsrP) and a heme-binding subunit (MsrQ). The cofactor is Mo-molybdopterin. In terms of processing, predicted to be exported by the Tat system. The position of the signal peptide cleavage has not been experimentally proven.

The protein localises to the periplasm. It catalyses the reaction L-methionyl-[protein] + a quinone + H2O = L-methionyl-(R)-S-oxide-[protein] + a quinol. In terms of biological role, part of the MsrPQ system that repairs oxidized periplasmic proteins containing methionine sulfoxide residues (Met-O), using respiratory chain electrons. Thus protects these proteins from oxidative-stress damage caused by reactive species of oxygen and chlorine generated by the host defense mechanisms. MsrPQ is essential for the maintenance of envelope integrity under bleach stress, rescuing a wide series of structurally unrelated periplasmic proteins from methionine oxidation. The catalytic subunit MsrP is non-stereospecific, being able to reduce both (R-) and (S-) diastereoisomers of methionine sulfoxide. Involved in protection against reactive chlorine species (RCS) generated by chlorite and hypochlorite. The chain is Protein-methionine-sulfoxide reductase catalytic subunit MsrP from Azospira oryzae (strain ATCC BAA-33 / DSM 13638 / PS) (Dechlorosoma suillum).